The primary structure comprises 359 residues: 5-formaminoimidazole-4-carboxamide-1-(beta)-D-ribofuranosyl 5'-monophosphate synthetase (359 aa).

2 residues coordinate 5-amino-1-(5-phospho-beta-D-ribosyl)imidazole-4-carboxamide: His27 and Ser94. Positions 116 to 340 (RRLLRWESER…FGEIVTMGRR (225 aa)) constitute an ATP-grasp domain. Residues 146 to 208 (PEDI…TNFC) and Glu230 each bind ATP. Asn258 is a binding site for 5-amino-1-(5-phospho-beta-D-ribosyl)imidazole-4-carboxamide. Mg(2+) contacts are provided by Gln297 and Glu310.

This sequence belongs to the phosphohexose mutase family. It depends on Mg(2+) as a cofactor. The cofactor is Mn(2+).

The enzyme catalyses 5-amino-1-(5-phospho-beta-D-ribosyl)imidazole-4-carboxamide + formate + ATP = 5-formamido-1-(5-phospho-D-ribosyl)imidazole-4-carboxamide + ADP + phosphate. The protein operates within purine metabolism; IMP biosynthesis via de novo pathway; 5-formamido-1-(5-phospho-D-ribosyl)imidazole-4-carboxamide from 5-amino-1-(5-phospho-D-ribosyl)imidazole-4-carboxamide (formate route): step 1/1. In terms of biological role, catalyzes the ATP- and formate-dependent formylation of 5-aminoimidazole-4-carboxamide-1-beta-d-ribofuranosyl 5'-monophosphate (AICAR) to 5-formaminoimidazole-4-carboxamide-1-beta-d-ribofuranosyl 5'-monophosphate (FAICAR) in the absence of folates. This chain is 5-formaminoimidazole-4-carboxamide-1-(beta)-D-ribofuranosyl 5'-monophosphate synthetase, found in Methanopyrus kandleri (strain AV19 / DSM 6324 / JCM 9639 / NBRC 100938).